A 99-amino-acid chain; its full sequence is DNA-directed RNA polymerase subunit omega (99 aa).

Positions Met-1–Ala-10 are enriched in low complexity. The segment at Met-1–Thr-20 is disordered.

It belongs to the RNA polymerase subunit omega family. The RNAP catalytic core consists of 2 alpha, 1 beta, 1 beta' and 1 omega subunit. When a sigma factor is associated with the core the holoenzyme is formed, which can initiate transcription.

It catalyses the reaction RNA(n) + a ribonucleoside 5'-triphosphate = RNA(n+1) + diphosphate. In terms of biological role, promotes RNA polymerase assembly. Latches the N- and C-terminal regions of the beta' subunit thereby facilitating its interaction with the beta and alpha subunits. The protein is DNA-directed RNA polymerase subunit omega of Rhodococcus erythropolis (strain PR4 / NBRC 100887).